The chain runs to 41 residues: Large ribosomal subunit protein bL36 (41 aa).

This sequence belongs to the bacterial ribosomal protein bL36 family.

This chain is Large ribosomal subunit protein bL36, found in Hydrogenovibrio crunogenus (strain DSM 25203 / XCL-2) (Thiomicrospira crunogena).